The primary structure comprises 127 residues: Small ribosomal subunit protein eS8 (127 aa).

This sequence belongs to the eukaryotic ribosomal protein eS8 family. As to quaternary structure, part of the 30S ribosomal subunit.

This is Small ribosomal subunit protein eS8 from Nanoarchaeum equitans (strain Kin4-M).